A 93-amino-acid polypeptide reads, in one-letter code: Putative transmembrane protein ORF25 (93 aa).

3 consecutive transmembrane segments (helical) span residues 1 to 21 (MAGI…NVNA), 22 to 42 (FLVL…YASI), and 60 to 80 (LWIF…VMSL).

The protein resides in the host membrane. The chain is Putative transmembrane protein ORF25 from His1 virus (isolate Australia/Victoria) (His1V).